The sequence spans 141 residues: Protein stum homolog (141 aa).

S26 is subject to Phosphoserine. 2 consecutive transmembrane segments (helical) span residues 51–71 and 87–107; these read FPVA…GTFV and RHVC…ILTA.

The protein belongs to the SPEC3 family. Stum subfamily.

Its subcellular location is the membrane. This chain is Protein stum homolog, found in Homo sapiens (Human).